Consider the following 256-residue polypeptide: Imidazole glycerol phosphate synthase subunit HisF (256 aa).

Active-site residues include aspartate 12 and aspartate 131.

This sequence belongs to the HisA/HisF family. Heterodimer of HisH and HisF.

The protein localises to the cytoplasm. It carries out the reaction 5-[(5-phospho-1-deoxy-D-ribulos-1-ylimino)methylamino]-1-(5-phospho-beta-D-ribosyl)imidazole-4-carboxamide + L-glutamine = D-erythro-1-(imidazol-4-yl)glycerol 3-phosphate + 5-amino-1-(5-phospho-beta-D-ribosyl)imidazole-4-carboxamide + L-glutamate + H(+). It functions in the pathway amino-acid biosynthesis; L-histidine biosynthesis; L-histidine from 5-phospho-alpha-D-ribose 1-diphosphate: step 5/9. Functionally, IGPS catalyzes the conversion of PRFAR and glutamine to IGP, AICAR and glutamate. The HisF subunit catalyzes the cyclization activity that produces IGP and AICAR from PRFAR using the ammonia provided by the HisH subunit. This Pseudomonas putida (strain ATCC 700007 / DSM 6899 / JCM 31910 / BCRC 17059 / LMG 24140 / F1) protein is Imidazole glycerol phosphate synthase subunit HisF.